Here is a 520-residue protein sequence, read N- to C-terminus: Cytochrome P450 716A67 (520 aa).

Residues 4 to 24 (SLAIYYGIILITVTLGLVYTW) traverse the membrane as a helical segment. Cys-466 contacts heme.

It belongs to the cytochrome P450 family. Heme is required as a cofactor.

It is found in the membrane. Catalyzes hydroxylation at the C-2 position of different intermediates of the hemolytic sapogenin biosynthetic pathway downstream of oleanolic acid synthesis. In Medicago truncatula (Barrel medic), this protein is Cytochrome P450 716A67.